The chain runs to 186 residues: UPF0301 protein CGSHiEE_01530 (186 aa).

It belongs to the UPF0301 (AlgH) family.

The protein is UPF0301 protein CGSHiEE_01530 of Haemophilus influenzae (strain PittEE).